Reading from the N-terminus, the 1474-residue chain is Alpha-2-macroglobulin (1474 aa).

Positions 1–23 are cleaved as a signal peptide; that stretch reads MGKNKLLHPSLVLLLLVLLPTDA. Cysteine 48 and cysteine 86 are disulfide-bonded. N-linked (GlcNAc...) (complex) asparagine glycosylation occurs at asparagine 55. N-linked (GlcNAc...) asparagine glycans are attached at residues asparagine 70 and asparagine 247. 2 disulfides stabilise this stretch: cysteine 251-cysteine 299 and cysteine 269-cysteine 287. Residues asparagine 396 and asparagine 410 are each glycosylated (N-linked (GlcNAc...) asparagine). 8 disulfide bridges follow: cysteine 470/cysteine 563, cysteine 595/cysteine 771, cysteine 642/cysteine 689, cysteine 821/cysteine 849, cysteine 847/cysteine 883, cysteine 921/cysteine 1321, cysteine 1079/cysteine 1127, and cysteine 1352/cysteine 1467. A bait region region spans residues 690 to 728; sequence PQLQQYEMHGPEGLRVGFYESDVMGRGHARLVHVEEPHT. Isoglutamyl lysine isopeptide (Gln-Lys) (interchain with K-? in other proteins) cross-links involve residues glutamine 693 and glutamine 694. 3 inhibitory regions span residues 704 to 709, 719 to 723, and 730 to 735; these read RVGFYE, RLVHV, and TVRKYF. Asparagine 869 carries an N-linked (GlcNAc...) asparagine glycan. The segment at residues 972-975 is a cross-link (isoglutamyl cysteine thioester (Cys-Gln)); that stretch reads CGEQ. An N-linked (GlcNAc...) asparagine glycan is attached at asparagine 991. The N-linked (GlcNAc...) (complex) asparagine glycan is linked to asparagine 1424.

Belongs to the protease inhibitor I39 (alpha-2-macroglobulin) family. In terms of assembly, homotetramer; disulfide-linked. Secreted in plasma.

It is found in the secreted. Functionally, is able to inhibit all four classes of proteinases by a unique 'trapping' mechanism. This protein has a peptide stretch, called the 'bait region' which contains specific cleavage sites for different proteinases. When a proteinase cleaves the bait region, a conformational change is induced in the protein which traps the proteinase. The entrapped enzyme remains active against low molecular weight substrates (activity against high molecular weight substrates is greatly reduced). Following cleavage in the bait region, a thioester bond is hydrolyzed and mediates the covalent binding of the protein to the proteinase. The protein is Alpha-2-macroglobulin (A2M) of Homo sapiens (Human).